Consider the following 407-residue polypeptide: Probable tRNA sulfurtransferase (407 aa).

The THUMP domain occupies 61–165 (NEITYRLSKI…LDAIYMYEEV (105 aa)). ATP-binding positions include 183–184 (ML), 208–209 (HF), Arg-265, Gly-287, and Gln-296.

Belongs to the ThiI family.

The protein resides in the cytoplasm. The catalysed reaction is [ThiI sulfur-carrier protein]-S-sulfanyl-L-cysteine + a uridine in tRNA + 2 reduced [2Fe-2S]-[ferredoxin] + ATP + H(+) = [ThiI sulfur-carrier protein]-L-cysteine + a 4-thiouridine in tRNA + 2 oxidized [2Fe-2S]-[ferredoxin] + AMP + diphosphate. It carries out the reaction [ThiS sulfur-carrier protein]-C-terminal Gly-Gly-AMP + S-sulfanyl-L-cysteinyl-[cysteine desulfurase] + AH2 = [ThiS sulfur-carrier protein]-C-terminal-Gly-aminoethanethioate + L-cysteinyl-[cysteine desulfurase] + A + AMP + 2 H(+). It participates in cofactor biosynthesis; thiamine diphosphate biosynthesis. Functionally, catalyzes the ATP-dependent transfer of a sulfur to tRNA to produce 4-thiouridine in position 8 of tRNAs, which functions as a near-UV photosensor. Also catalyzes the transfer of sulfur to the sulfur carrier protein ThiS, forming ThiS-thiocarboxylate. This is a step in the synthesis of thiazole, in the thiamine biosynthesis pathway. The sulfur is donated as persulfide by IscS. This is Probable tRNA sulfurtransferase from Staphylococcus aureus (strain Mu3 / ATCC 700698).